A 319-amino-acid chain; its full sequence is Large ribosomal subunit protein uL10 (319 aa).

The span at 286–295 (ADSGAAAPSA) shows a compositional bias: low complexity. Residues 286–319 (ADSGAAAPSAAKEEEKKEEPEEESDGDLGMSLFD) form a disordered region.

Belongs to the universal ribosomal protein uL10 family. As to quaternary structure, P0 forms a pentameric complex by interaction with dimers of P1 and P2. Interacts with NSF. Phosphorylated. As to expression, highly expressed in stems, inflorescences and immature seeds (at protein level). Expressed in leaves and mature seeds (at protein level).

Its function is as follows. Ribosomal protein P0 is the functional equivalent of E.coli protein L10. The polypeptide is Large ribosomal subunit protein uL10 (Oryza sativa subsp. japonica (Rice)).